A 547-amino-acid polypeptide reads, in one-letter code: Undecaprenyl phosphate-alpha-4-amino-4-deoxy-L-arabinose arabinosyl transferase (547 aa).

10 helical membrane-spanning segments follow: residues 83 to 103 (FASA…ALQL), 111 to 131 (FLAS…TYSV), 174 to 194 (FLTK…PYVI), 205 to 225 (FGPL…IAVH), 253 to 273 (APFW…LGLL), 286 to 306 (ISPE…FFSI), 311 to 331 (LLTY…ANAV), 346 to 366 (AWLN…LAFS), 378 to 398 (GALA…FIQL), and 408 to 428 (SALC…QSLI).

Belongs to the glycosyltransferase 83 family.

The protein localises to the cell inner membrane. It carries out the reaction 4-amino-4-deoxy-alpha-L-arabinopyranosyl di-trans,octa-cis-undecaprenyl phosphate + lipid IVA = lipid IIA + di-trans,octa-cis-undecaprenyl phosphate.. It participates in lipopolysaccharide metabolism; 4-amino-4-deoxy-beta-L-arabinose-lipid A biosynthesis. Its function is as follows. Catalyzes the transfer of the L-Ara4N moiety of the glycolipid undecaprenyl phosphate-alpha-L-Ara4N to lipid A. The modified arabinose is attached to lipid A and is required for resistance to polymyxin and cationic antimicrobial peptides. This Aeromonas hydrophila subsp. hydrophila (strain ATCC 7966 / DSM 30187 / BCRC 13018 / CCUG 14551 / JCM 1027 / KCTC 2358 / NCIMB 9240 / NCTC 8049) protein is Undecaprenyl phosphate-alpha-4-amino-4-deoxy-L-arabinose arabinosyl transferase.